The chain runs to 727 residues: 1,4-alpha-glucan branching enzyme GlgB (727 aa).

The active-site Nucleophile is the Asp-405. Glu-458 serves as the catalytic Proton donor.

The protein belongs to the glycosyl hydrolase 13 family. GlgB subfamily. In terms of assembly, monomer.

It carries out the reaction Transfers a segment of a (1-&gt;4)-alpha-D-glucan chain to a primary hydroxy group in a similar glucan chain.. The protein operates within glycan biosynthesis; glycogen biosynthesis. Functionally, catalyzes the formation of the alpha-1,6-glucosidic linkages in glycogen by scission of a 1,4-alpha-linked oligosaccharide from growing alpha-1,4-glucan chains and the subsequent attachment of the oligosaccharide to the alpha-1,6 position. This is 1,4-alpha-glucan branching enzyme GlgB from Yersinia pseudotuberculosis serotype I (strain IP32953).